The primary structure comprises 862 residues: Leucine--tRNA ligase (862 aa).

Residues 42–52 (PYPSGKIHIGH) carry the 'HIGH' region motif. The 'KMSKS' region motif lies at 614-618 (KMSKS). Residue Lys-617 coordinates ATP.

The protein belongs to the class-I aminoacyl-tRNA synthetase family.

It is found in the cytoplasm. The catalysed reaction is tRNA(Leu) + L-leucine + ATP = L-leucyl-tRNA(Leu) + AMP + diphosphate. In Syntrophus aciditrophicus (strain SB), this protein is Leucine--tRNA ligase.